The following is a 366-amino-acid chain: Variable large protein 10 (366 aa).

Residues 1–18 (MRKRISAIIMTLFMVLAS) form the signal peptide. Cys-19 carries N-palmitoyl cysteine lipidation. The S-diacylglycerol cysteine moiety is linked to residue Cys-19.

The protein belongs to the variable large protein (Vlp) family. Beta subfamily.

The protein localises to the cell outer membrane. Functionally, the Vlp and Vsp proteins are antigenically distinct proteins, only one vlp or vsp gene is transcriptionally active at any one time. Switching between these genes is a mechanism of host immune response evasion. The protein is Variable large protein 10 of Borrelia hermsii.